The sequence spans 410 residues: Class E basic helix-loop-helix protein 41 (410 aa).

Lys-31 is covalently cross-linked (Glycyl lysine isopeptide (Lys-Gly) (interchain with G-Cter in SUMO2)). The 56-residue stretch at 44-99 folds into the bHLH domain; sequence TYKLPHRLIEKKRRDRINECIAQLKDLLPEHLKLTTLGHLEKAVVLELTLKHLKAL. Residue Lys-121 forms a Glycyl lysine isopeptide (Lys-Gly) (interchain with G-Cter in SUMO2) linkage. The Orange domain maps to 131–166; it reads FHSGFQTCAKEVLQYLARFESWTPREPRCAQLVSHL. 2 disordered regions span residues 209 to 251 and 371 to 410; these read IQRT…SAAP and EVAP…KDAP. Lys-240 participates in a covalent cross-link: Glycyl lysine isopeptide (Lys-Gly) (interchain with G-Cter in SUMO2).

In terms of assembly, homodimer. Heterodimer with BHLHE40/DEC1. Interacts with CIART. Interacts with BMAL1 and RXRA. Interacts with NR0B2 and HNF1A. Highly expressed in the caudate putamen, pineal gland, granular cell layer of the cerebellum, olfactory bulb, piriform cortex, hippocampus and hypothalamic nuclei. Moderately expressed in skeletal muscle, heart. Weakly expressed in lung.

The protein resides in the nucleus. In terms of biological role, transcriptional repressor involved in the regulation of the circadian rhythm by negatively regulating the activity of the clock genes and clock-controlled genes. Acts as the negative limb of a novel autoregulatory feedback loop (DEC loop) which differs from the one formed by the PER and CRY transcriptional repressors (PER/CRY loop). Both these loops are interlocked as it represses the expression of PER1 and in turn is repressed by PER1/2 and CRY1/2. Represses the activity of the circadian transcriptional activator: CLOCK-BMAL1 heterodimer by competing for the binding to E-box elements (5'-CACGTG-3') found within the promoters of its target genes. Negatively regulates its own expression and the expression of DBP and BHLHE41/DEC2. Acts as a corepressor of RXR and the RXR-LXR heterodimers and represses the ligand-induced RXRA/B/G, NR1H3/LXRA, NR1H4 and VDR transactivation activity. Inhibits HNF1A-mediated transactivation of CYP1A2, CYP2E1 and CYP3A11. This Rattus norvegicus (Rat) protein is Class E basic helix-loop-helix protein 41 (Bhlhb3).